A 436-amino-acid polypeptide reads, in one-letter code: Methyl-accepting chemotaxis protein Amb0994 (436 aa).

The Cytoplasmic portion of the chain corresponds to M1–Y8. The helical transmembrane segment at A9–F29 threads the bilayer. A topological domain (periplasmic) is located at residue G30. A helical membrane pass occupies residues L31 to V51. Over G52–R436 the chain is Cytoplasmic. The 237-residue stretch at A180–S416 folds into the Methyl-accepting transducer domain. Q211 is subject to Glutamate methyl ester (Gln). Residue E225 is modified to Glutamate methyl ester (Glu). The required for interaction with MamK and to respond to the magnetic field stretch occupies residues T321–R436.

It belongs to the methyl-accepting chemotaxis (MCP) protein family. Interacts with MamK at cell poles and septa.

The protein resides in the cell inner membrane. Functionally, probable methyl-accepting taxis protein. May be the receptor that senses the torque generated from the interaction between the magnetosome dipole moment and the external magnetic field. Overproduction interferes with magnetotaxis, cells respond more slowly to changes in the magnetic field; requires the MamK-interacting C-terminus of the protein. The effect of magnetic sensing is to control flagellar rotation. Its function is as follows. Chemotactic-signal transducers respond to changes in the concentration of attractants and repellents in the environment, transduce a signal from the outside to the inside of the cell, and facilitate sensory adaptation through variation of methylation levels. Attractants increase the level of methylation while repellents decrease the level of methylation. In Paramagnetospirillum magneticum (strain ATCC 700264 / AMB-1) (Magnetospirillum magneticum), this protein is Methyl-accepting chemotaxis protein Amb0994.